A 1210-amino-acid chain; its full sequence is Epidermal growth factor receptor (1210 aa).

Residues 1–24 form the signal peptide; sequence MRPSGTARTTLLVLLTALCAAGGA. The Extracellular portion of the chain corresponds to 25-647; sequence LEEKKVCQGT…VWPSGPKIPS (623 aa). C31 and C58 form a disulfide bridge. An Approximate repeat occupies 75-300; it reads DLSFLKTIQE…CVKKCPRNYV (226 aa). N-linked (GlcNAc...) asparagine glycans are attached at residues N128, N175, and N196. Disulfide bonds link C157/C187, C190/C199, C194/C207, C215/C223, C219/C231, C232/C240, C236/C248, C251/C260, C264/C291, C295/C307, C311/C326, C329/C333, and C337/C362. The residue at position 229 (S229) is a Phosphoserine. N-linked (GlcNAc...) asparagine glycosylation is found at N352, N413, and N444. The Approximate repeat unit spans residues 390–600; it reads RELEILKTVK…CVKTCPAGIM (211 aa). 11 disulfides stabilise this stretch: C470/C499, C506/C515, C510/C523, C526/C535, C539/C555, C558/C571, C562/C579, C582/C591, C595/C617, C620/C628, and C624/C636. Residue N528 is glycosylated (N-linked (GlcNAc...) asparagine). N568 carries an N-linked (GlcNAc...) asparagine glycan. 2 N-linked (GlcNAc...) asparagine glycosylation sites follow: N603 and N623. Residues 648–670 form a helical membrane-spanning segment; it reads IATGIVGGLLFIVVVALGIGLFM. Topologically, residues 671–1210 are cytoplasmic; it reads RRRHIVRKRT…APPSSEFIGA (540 aa). Residue T680 is modified to Phosphothreonine; by PKC and PKD/PRKD1. The important for dimerization, phosphorylation and activation stretch occupies residues 690-706; it reads LVEPLTPSGEAPNQAHL. At T695 the chain carries Phosphothreonine; by PKD/PRKD1. Phosphoserine is present on S697. Positions 714–981 constitute a Protein kinase domain; that stretch reads FKKIKVLGSG…KMARDPQRYL (268 aa). A Glycyl lysine isopeptide (Lys-Gly) (interchain with G-Cter in ubiquitin) cross-link involves residue K718. 720-728 lines the ATP pocket; it reads LGSGAFGTV. K739 participates in a covalent cross-link: Glycyl lysine isopeptide (Lys-Gly) (interchain with G-Cter in ubiquitin). Residue K747 coordinates ATP. K747 carries the post-translational modification N6-(2-hydroxyisobutyryl)lysine. Glycyl lysine isopeptide (Lys-Gly) (interchain with G-Cter in ubiquitin) cross-links involve residues K756 and K759. 792 to 793 contributes to the ATP binding site; the sequence is TQ. D839 functions as the Proton acceptor in the catalytic mechanism. D857 serves as a coordination point for ATP. A Glycyl lysine isopeptide (Lys-Gly) (interchain with G-Cter in ubiquitin) cross-link involves residue K869. Y871 is subject to Phosphotyrosine. Glycyl lysine isopeptide (Lys-Gly) (interchain with G-Cter in ubiquitin) cross-links involve residues K931, K962, and K972. Phosphoserine occurs at positions 993 and 997. 2 positions are modified to phosphotyrosine; by autocatalysis: Y1000 and Y1018. A phosphoserine mark is found at S1028 and S1041. Position 1043 is a phosphothreonine (T1043). Phosphoserine is present on S1044. A lipid anchor (S-palmitoyl cysteine) is attached at C1051. Position 1069 is a phosphotyrosine (Y1069). Phosphoserine is present on residues S1070 and S1071. Phosphotyrosine; by autocatalysis is present on residues Y1092 and Y1110. The tract at residues 1113–1137 is disordered; it reads QPLHPAPGRDLHYQNPHSNAVGNPE. Positions 1127 to 1137 are enriched in polar residues; sequence NPHSNAVGNPE. C1146 carries S-palmitoyl cysteine lipidation. Residue S1166 is modified to Phosphoserine. Y1172 carries the post-translational modification Phosphotyrosine; by autocatalysis. Y1197 carries the phosphotyrosine modification. R1199 carries the omega-N-methylarginine modification.

Belongs to the protein kinase superfamily. Tyr protein kinase family. EGF receptor subfamily. As to quaternary structure, binding of the ligand triggers homo- and/or heterodimerization of the receptor triggering its autophosphorylation. Heterodimer with ERBB2. Forms a complex with CCDC88A/GIV (via SH2-like region) and GNAI3 which leads to enhanced EGFR signaling and triggering of cell migration; binding of CCDC88A requires autophosphorylation of the EGFR C-terminal region, and ligand stimulation is required for recruitment of GNAI3 to the complex. Interacts with ERRFI1; inhibits dimerization of the kinase domain and autophosphorylation. Part of a complex with ERBB2 and either PIK3C2A or PIK3C2B. Interacts with GRB2; an adapter protein coupling the receptor to downstream signaling pathways. Interacts with GAB2; involved in signaling downstream of EGFR. Interacts with STAT3; mediates EGFR downstream signaling in cell proliferation. Interacts with RIPK1; involved in NF-kappa-B activation. Interacts (autophosphorylated) with CBL, CBLB and CBLC; involved in EGFR ubiquitination and regulation; interaction with CBL is reduced in the presence of tensin TNS4. Interacts with SOCS5; regulates EGFR degradation through ELOC- and ELOB-mediated ubiquitination and proteasomal degradation. Interacts with PRMT5; methylates EGFR and enhances interaction with PTPN6. Interacts (phosphorylated) with PTPN6; inhibits EGFR-dependent activation of MAPK/ERK. Interacts with COPG1; essential for regulation of EGF-dependent nuclear transport of EGFR by retrograde trafficking from the Golgi to the ER. Interacts with TNK2; this interaction is dependent on EGF stimulation and kinase activity of EGFR. Interacts with PCNA; positively regulates PCNA. Interacts with PELP1. Interacts with MUC1. Interacts with AP2M1. Interacts with FER. Interacts (via SH2 domains) with GRB2, NCK1 and NCK2. Interacts with EPS8; mediates EPS8 phosphorylation. Interacts with ATXN2. Interacts with GAREM1. Interacts (ubiquitinated) with ANKRD13A/B/D; the interaction is direct and may regulate EGFR internalization after EGF stimulation. Interacts with GPER1; the interaction occurs in an estrogen-dependent manner. Interacts (via C-terminal cytoplasmic kinase domain) with ZPR1 (via zinc fingers). Interacts with RNF115 and RNF126. Interacts with GPRC5A (via its transmembrane domain). Interacts with FAM83B; positively regulates EGFR inducing its autophosphorylation in absence of stimulation by EGF. Interacts with LAPTM4B; positively correlates with EGFR activation. Interacts with STX19. Interacts with CD44. Interacts with PGRMC1; the interaction requires PGRMC1 homodimerization. Interacts with PIKFYVE. Interacts with NEU3. Interacts with TRAF4. Interacts with the ant venom OMEGA-myrmeciitoxin(02)-Mg1a. Interacts with CD82; this interaction facilitates ligand-induced endocytosis of the receptor and its subsequent desensitization. Monoubiquitinated and polyubiquitinated upon EGF stimulation; which does not affect tyrosine kinase activity or signaling capacity but may play a role in lysosomal targeting. Polyubiquitin linkage is mainly through 'Lys-63', but linkage through 'Lys-48', 'Lys-11' and 'Lys-29' also occurs. Deubiquitinated by OTUD7B, preventing degradation. Ubiquitinated by RNF115 and RNF126. Ubiquitinated by ZNRF1 or CBL at different lysines in response to EGF stimulation; leading to recruitment of the ESCRT machinery and subsequent degradation in the lysosomes. Deubiquitinated by UCHL1 leading to the inhibition of its degradation. Post-translationally, phosphorylated on Tyr residues in response to EGF. Phosphorylation at Ser-697 is partial and occurs only if Thr-695 is phosphorylated. Phosphorylation at Thr-680 and Thr-695 by PRKD1 inhibits EGF-induced MAPK8/JNK1 activation. Dephosphorylation by PTPRJ prevents endocytosis and stabilizes the receptor at the plasma membrane. Autophosphorylation at Tyr-1199 is stimulated by methylation at Arg-1199 and enhances interaction with PTPN6. Autophosphorylation at Tyr-1092 and/or Tyr-1110 recruits STAT3. Dephosphorylated by PTPN1 and PTPN2. In terms of processing, palmitoylated on Cys residues by ZDHHC20. Palmitoylation inhibits internalization after ligand binding, and increases the persistence of tyrosine-phosphorylated EGFR at the cell membrane. Palmitoylation increases the amplitude and duration of EGFR signaling. Methylated. Methylation at Arg-1199 by PRMT5 stimulates phosphorylation at Tyr-1197.

It is found in the cell membrane. The protein localises to the endoplasmic reticulum membrane. It localises to the golgi apparatus membrane. Its subcellular location is the nucleus membrane. The protein resides in the endosome. It is found in the endosome membrane. The protein localises to the nucleus. It carries out the reaction L-tyrosyl-[protein] + ATP = O-phospho-L-tyrosyl-[protein] + ADP + H(+). Its activity is regulated as follows. Endocytosis and inhibition of the activated EGFR by phosphatases like PTPRJ and PTPRK constitute immediate regulatory mechanisms. Upon EGF-binding phosphorylates EPS15 that regulates EGFR endocytosis and activity. Moreover, inducible feedback inhibitors including LRIG1, SOCS4, SOCS5 and ERRFI1 constitute alternative regulatory mechanisms for the EGFR signaling. Receptor tyrosine kinase binding ligands of the EGF family and activating several signaling cascades to convert extracellular cues into appropriate cellular responses. Known ligands include EGF, TGFA/TGF-alpha, AREG, epigen/EPGN, BTC/betacellulin, epiregulin/EREG and HBEGF/heparin-binding EGF. Ligand binding triggers receptor homo- and/or heterodimerization and autophosphorylation on key cytoplasmic residues. The phosphorylated receptor recruits adapter proteins like GRB2 which in turn activates complex downstream signaling cascades. Activates at least 4 major downstream signaling cascades including the RAS-RAF-MEK-ERK, PI3 kinase-AKT, PLCgamma-PKC and STATs modules. May also activate the NF-kappa-B signaling cascade. Also directly phosphorylates other proteins like RGS16, activating its GTPase activity and probably coupling the EGF receptor signaling to the G protein-coupled receptor signaling. Also phosphorylates MUC1 and increases its interaction with SRC and CTNNB1/beta-catenin. Positively regulates cell migration via interaction with CCDC88A/GIV which retains EGFR at the cell membrane following ligand stimulation, promoting EGFR signaling which triggers cell migration. Plays a role in enhancing learning and memory performance. Plays a role in mammalian pain signaling (long-lasting hypersensitivity). This Mus musculus (Mouse) protein is Epidermal growth factor receptor.